Consider the following 273-residue polypeptide: 4-hydroxy-tetrahydrodipicolinate reductase (273 aa).

NAD(+) contacts are provided by residues 12–17 (GAGGRM) and glutamate 38. An NADP(+)-binding site is contributed by arginine 39. Residues 102 to 104 (GTT) and 126 to 129 (AANF) contribute to the NAD(+) site. Histidine 159 functions as the Proton donor/acceptor in the catalytic mechanism. Histidine 160 contributes to the (S)-2,3,4,5-tetrahydrodipicolinate binding site. The Proton donor role is filled by lysine 163. 169-170 (GT) provides a ligand contact to (S)-2,3,4,5-tetrahydrodipicolinate.

This sequence belongs to the DapB family. As to quaternary structure, homotetramer.

The protein localises to the cytoplasm. The enzyme catalyses (S)-2,3,4,5-tetrahydrodipicolinate + NAD(+) + H2O = (2S,4S)-4-hydroxy-2,3,4,5-tetrahydrodipicolinate + NADH + H(+). It carries out the reaction (S)-2,3,4,5-tetrahydrodipicolinate + NADP(+) + H2O = (2S,4S)-4-hydroxy-2,3,4,5-tetrahydrodipicolinate + NADPH + H(+). It participates in amino-acid biosynthesis; L-lysine biosynthesis via DAP pathway; (S)-tetrahydrodipicolinate from L-aspartate: step 4/4. Functionally, catalyzes the conversion of 4-hydroxy-tetrahydrodipicolinate (HTPA) to tetrahydrodipicolinate. In Salmonella schwarzengrund (strain CVM19633), this protein is 4-hydroxy-tetrahydrodipicolinate reductase.